The primary structure comprises 121 residues: Ribonuclease P protein component (121 aa).

The protein belongs to the RnpA family. Consists of a catalytic RNA component (M1 or rnpB) and a protein subunit.

It catalyses the reaction Endonucleolytic cleavage of RNA, removing 5'-extranucleotides from tRNA precursor.. RNaseP catalyzes the removal of the 5'-leader sequence from pre-tRNA to produce the mature 5'-terminus. It can also cleave other RNA substrates such as 4.5S RNA. The protein component plays an auxiliary but essential role in vivo by binding to the 5'-leader sequence and broadening the substrate specificity of the ribozyme. The protein is Ribonuclease P protein component of Lactobacillus delbrueckii subsp. bulgaricus (strain ATCC 11842 / DSM 20081 / BCRC 10696 / JCM 1002 / NBRC 13953 / NCIMB 11778 / NCTC 12712 / WDCM 00102 / Lb 14).